The following is a 215-amino-acid chain: High mobility group protein B1 (215 aa).

The HMG box 1 DNA-binding region spans 9–79 (PRGKMSSYAF…RYEKEMKNYV (71 aa)). Cys23 is modified (cysteine sulfonic acid (-SO3H); alternate). Cys23 and Cys45 are oxidised to a cystine. The segment at 27 to 43 (HKKKHPDASVNFSEFSK) is NLS 1. Positions 27 to 43 (HKKKHPDASVNFSEFSK) match the Nuclear localization signal (NLS) 1 motif. Cys45 is subject to Cysteine sulfonic acid (-SO3H); alternate. The interval 75-95 (MKNYVPPKGETKKKFKDPNAP) is disordered. Residues 83–94 (GETKKKFKDPNA) are compositionally biased toward basic and acidic residues. The segment at residues 95-163 (PKRPPSAFFL…KYEKDIAAYR (69 aa)) is a DNA-binding region (HMG box 2). A Cysteine sulfonic acid (-SO3H) modification is found at Cys106. Residues 166-179 (GKVDAGKKVVAKAE) are compositionally biased toward basic and acidic residues. Positions 166 to 215 (GKVDAGKKVVAKAEKSKKKKEEEEDEDEDEEDEEDEEEEEEEEEDDDDDE) are disordered. The segment at 178-184 (AEKSKKK) is NLS 2. The Nuclear localization signal (NLS) 2 motif lies at 178–184 (AEKSKKK). Positions 187 to 215 (EEEDEDEDEEDEEDEEEEEEEEEDDDDDE) are enriched in acidic residues. Residues 196-210 (EDEEDEEEEEEEEED) form an involved in intramolecular interaction with K-3 region. Residues 211–215 (DDDDE) form an involved in interaction with histone H3 region.

This sequence belongs to the HMGB family. Reduction/oxidation of cysteine residues Cys-23, Cys-45 and Cys-106 and a possible intramolecular disulfide bond involving Cys-23 and Cys-45 give rise to different redox forms with specific functional activities: 1- fully reduced HMGB1 (HMGB1C23hC45hC106h), 2- disulfide HMGB1 (HMGB1C23-C45C106h) and 3- sulfonyl HMGB1 (HMGB1C23soC45soC106so).

The protein resides in the nucleus. Its subcellular location is the chromosome. It localises to the cytoplasm. The protein localises to the secreted. Its function is as follows. Multifunctional redox sensitive protein with various roles in different cellular compartments. Nuclear functions are attributed to fully reduced HGMB1. Associates with chromatin and binds DNA with a preference to non-canonical DNA structures such as single-stranded DNA, DNA-containing cruciforms or bent structures, supercoiled DNA and ZDNA. Can bent DNA and enhance DNA flexibility by looping thus providing a mechanism to promote activities on various gene promoters. Can restructure the canonical nucleosome. Proposed to be an universal biosensor for nucleic acids. May promote inflammatory response to sterile and infectious signals and may be involved in the coordination and integration of innate and adaptive immune responses. In the cytoplasm may function as sensor and/or chaperone for immunogenic nucleic acids, and mediate autophagy. May act as danger associated molecular pattern (DAMP) molecule that amplifies immune responses during tissue injury. This Gallus gallus (Chicken) protein is High mobility group protein B1 (HMGB1).